Here is a 152-residue protein sequence, read N- to C-terminus: Transcriptional regulator MraZ (152 aa).

2 SpoVT-AbrB domains span residues 5 to 52 (ASAV…PLNQ) and 81 to 124 (ATEC…SESE).

Belongs to the MraZ family. As to quaternary structure, forms oligomers.

The protein localises to the cytoplasm. It is found in the nucleoid. The chain is Transcriptional regulator MraZ from Histophilus somni (strain 2336) (Haemophilus somnus).